The chain runs to 243 residues: Glycerophosphodiester phosphodiesterase (243 aa).

Residues 3-239 (TLVIAHRGDS…DDPETLINLV (237 aa)) enclose the GP-PDE domain. The Proton acceptor role is filled by histidine 8. Ca(2+) contacts are provided by glutamate 35 and aspartate 37. Histidine 50 functions as the Proton donor in the catalytic mechanism. Ca(2+) is bound at residue glutamate 110.

It belongs to the glycerophosphoryl diester phosphodiesterase family. As to quaternary structure, homodimer. The cofactor is Mg(2+). Ca(2+) serves as cofactor.

It carries out the reaction a sn-glycero-3-phosphodiester + H2O = an alcohol + sn-glycerol 3-phosphate + H(+). It catalyses the reaction sn-glycerol 3-phosphocholine + H2O = sn-glycerol 3-phosphate + choline + H(+). Its activity is regulated as follows. Inhibited by EDTA. Its function is as follows. Glycerophosphodiester phosphodiesterase hydrolyzes glycerophosphodiesters into glycerol-3-phosphate (G3P) and the corresponding alcohol. Can use glycerophosphocholine. The chain is Glycerophosphodiester phosphodiesterase from Caldanaerobacter subterraneus subsp. tengcongensis (strain DSM 15242 / JCM 11007 / NBRC 100824 / MB4) (Thermoanaerobacter tengcongensis).